Reading from the N-terminus, the 760-residue chain is Polyribonucleotide nucleotidyltransferase (760 aa).

Residues Asp492 and Asp498 each contribute to the Mg(2+) site. The region spanning 559 to 618 (PQHAEVFVNPDIIRIIIGPGGKNIKAITATTGASIDIEDSGRVSIFAPTLEAMEMAREMV) is the KH domain. Residues 628–702 (GKNYTGKVRK…SRKAVLLEEQ (75 aa)) enclose the S1 motif domain. The disordered stretch occupies residues 706-760 (WKPEDTARPSGPREGGRRDGGRDGRRDGGRDGRRDGGRDGGRRDGGRRDGGRDRN). Over residues 719-760 (EGGRRDGGRDGRRDGGRDGRRDGGRDGGRRDGGRRDGGRDRN) the composition is skewed to basic and acidic residues.

It belongs to the polyribonucleotide nucleotidyltransferase family. Mg(2+) is required as a cofactor.

The protein resides in the cytoplasm. It carries out the reaction RNA(n+1) + phosphate = RNA(n) + a ribonucleoside 5'-diphosphate. Functionally, involved in mRNA degradation. Catalyzes the phosphorolysis of single-stranded polyribonucleotides processively in the 3'- to 5'-direction. The sequence is that of Polyribonucleotide nucleotidyltransferase from Nitratidesulfovibrio vulgaris (strain ATCC 29579 / DSM 644 / CCUG 34227 / NCIMB 8303 / VKM B-1760 / Hildenborough) (Desulfovibrio vulgaris).